The primary structure comprises 379 residues: Carbamoyl phosphate synthase small chain (379 aa).

The interval 1–188 (MSTPAILALA…ELGKGFTQPE (188 aa)) is CPSase. The L-glutamine site is built by S47, G240, and G242. The 188-residue stretch at 192-379 (HVVAYDYGVK…FIELIEAAKK (188 aa)) folds into the Glutamine amidotransferase type-1 domain. The active-site Nucleophile is C269. Residues L270, Q273, N311, G313, and F314 each contribute to the L-glutamine site. Catalysis depends on residues H353 and E355.

Belongs to the CarA family. Composed of two chains; the small (or glutamine) chain promotes the hydrolysis of glutamine to ammonia, which is used by the large (or ammonia) chain to synthesize carbamoyl phosphate. Tetramer of heterodimers (alpha,beta)4.

It carries out the reaction hydrogencarbonate + L-glutamine + 2 ATP + H2O = carbamoyl phosphate + L-glutamate + 2 ADP + phosphate + 2 H(+). The enzyme catalyses L-glutamine + H2O = L-glutamate + NH4(+). It functions in the pathway amino-acid biosynthesis; L-arginine biosynthesis; carbamoyl phosphate from bicarbonate: step 1/1. Its pathway is pyrimidine metabolism; UMP biosynthesis via de novo pathway; (S)-dihydroorotate from bicarbonate: step 1/3. In terms of biological role, small subunit of the glutamine-dependent carbamoyl phosphate synthetase (CPSase). CPSase catalyzes the formation of carbamoyl phosphate from the ammonia moiety of glutamine, carbonate, and phosphate donated by ATP, constituting the first step of 2 biosynthetic pathways, one leading to arginine and/or urea and the other to pyrimidine nucleotides. The small subunit (glutamine amidotransferase) binds and cleaves glutamine to supply the large subunit with the substrate ammonia. In Acinetobacter baylyi (strain ATCC 33305 / BD413 / ADP1), this protein is Carbamoyl phosphate synthase small chain.